Consider the following 160-residue polypeptide: Major allergen Pru av 1 (160 aa).

Belongs to the BetVI family.

The polypeptide is Major allergen Pru av 1 (PRUA1) (Prunus avium (Cherry)).